The following is a 315-amino-acid chain: Ribosomal RNA small subunit methyltransferase H (315 aa).

Residues 36-38 (GGH), Asp56, Phe81, Asp103, and Gln110 each bind S-adenosyl-L-methionine.

The protein belongs to the methyltransferase superfamily. RsmH family.

It localises to the cytoplasm. The catalysed reaction is cytidine(1402) in 16S rRNA + S-adenosyl-L-methionine = N(4)-methylcytidine(1402) in 16S rRNA + S-adenosyl-L-homocysteine + H(+). Functionally, specifically methylates the N4 position of cytidine in position 1402 (C1402) of 16S rRNA. This chain is Ribosomal RNA small subunit methyltransferase H, found in Idiomarina loihiensis (strain ATCC BAA-735 / DSM 15497 / L2-TR).